Reading from the N-terminus, the 275-residue chain is Large ribosomal subunit protein uL2 (275 aa).

The tract at residues 224 to 275 (AMNPVDHPHGGGEAKAGQGNPHPVTPWGVPTKGYKTRKNKRTQQFIVRDRRG) is disordered.

It belongs to the universal ribosomal protein uL2 family. As to quaternary structure, part of the 50S ribosomal subunit. Forms a bridge to the 30S subunit in the 70S ribosome.

In terms of biological role, one of the primary rRNA binding proteins. Required for association of the 30S and 50S subunits to form the 70S ribosome, for tRNA binding and peptide bond formation. It has been suggested to have peptidyltransferase activity; this is somewhat controversial. Makes several contacts with the 16S rRNA in the 70S ribosome. This is Large ribosomal subunit protein uL2 from Xanthomonas oryzae pv. oryzae (strain MAFF 311018).